We begin with the raw amino-acid sequence, 318 residues long: NADH-ubiquinone oxidoreductase chain 1 (318 aa).

The next 8 membrane-spanning stretches (helical) occupy residues 2 to 22 (FMVNLLLLIIPALIAMAFLTL), 76 to 96 (TLALSIALLMWSPLPMPHPLI), 98 to 118 (FNLGLLFMLATSSLAVYSILW), 140 to 160 (ISYEVTLAIILLSTLLMSGSF), 171 to 191 (HSWLLLPSWPMAMMWFTSTLA), 217 to 237 (AGSFALFFMAEYMNIIMMNAL), 253 to 273 (ELYTMNFMTKTLLLTTLFLWI), and 294 to 314 (LPLTLALCMWYISMPALTSGI).

The protein belongs to the complex I subunit 1 family. Core subunit of respiratory chain NADH dehydrogenase (Complex I) which is composed of 45 different subunits.

It localises to the mitochondrion inner membrane. It catalyses the reaction a ubiquinone + NADH + 5 H(+)(in) = a ubiquinol + NAD(+) + 4 H(+)(out). Functionally, core subunit of the mitochondrial membrane respiratory chain NADH dehydrogenase (Complex I) which catalyzes electron transfer from NADH through the respiratory chain, using ubiquinone as an electron acceptor. Essential for the catalytic activity and assembly of complex I. This Ateles paniscus (Black spider monkey) protein is NADH-ubiquinone oxidoreductase chain 1 (MT-ND1).